The following is a 119-amino-acid chain: Large ribosomal subunit protein uL22 (119 aa).

The protein belongs to the universal ribosomal protein uL22 family. As to quaternary structure, part of the 50S ribosomal subunit.

Functionally, this protein binds specifically to 23S rRNA; its binding is stimulated by other ribosomal proteins, e.g. L4, L17, and L20. It is important during the early stages of 50S assembly. It makes multiple contacts with different domains of the 23S rRNA in the assembled 50S subunit and ribosome. Its function is as follows. The globular domain of the protein is located near the polypeptide exit tunnel on the outside of the subunit, while an extended beta-hairpin is found that lines the wall of the exit tunnel in the center of the 70S ribosome. The polypeptide is Large ribosomal subunit protein uL22 (Rickettsia rickettsii (strain Iowa)).